We begin with the raw amino-acid sequence, 139 residues long: Flagellar basal-body rod protein FlgC (139 aa).

It belongs to the flagella basal body rod proteins family. As to quaternary structure, the basal body constitutes a major portion of the flagellar organelle and consists of four rings (L,P,S, and M) mounted on a central rod. The rod consists of about 26 subunits of FlgG in the distal portion, and FlgB, FlgC and FlgF are thought to build up the proximal portion of the rod with about 6 subunits each.

The protein resides in the bacterial flagellum basal body. The protein is Flagellar basal-body rod protein FlgC (flgC) of Agrobacterium fabrum (strain C58 / ATCC 33970) (Agrobacterium tumefaciens (strain C58)).